The following is a 481-amino-acid chain: Proline--tRNA ligase (481 aa).

The protein belongs to the class-II aminoacyl-tRNA synthetase family. ProS type 3 subfamily. Homodimer.

Its subcellular location is the cytoplasm. It catalyses the reaction tRNA(Pro) + L-proline + ATP = L-prolyl-tRNA(Pro) + AMP + diphosphate. Catalyzes the attachment of proline to tRNA(Pro) in a two-step reaction: proline is first activated by ATP to form Pro-AMP and then transferred to the acceptor end of tRNA(Pro). This is Proline--tRNA ligase from Saccharolobus islandicus (strain M.16.27) (Sulfolobus islandicus).